The chain runs to 574 residues: MVALTEKTEKRLTIQTADIAQDTTAIRSLDWERDRFDIEFGLQNGTTYNSFLIRGEQIALVDTSHEKFRQLYFDTLTGLINPTEINYLIISHTEPDHSGLVKDLLQMAPEITVVGSKVAIQFLEDLVHQPFKRKIVKNGDRLDLGNGHEFEFVIAPNLHWPDTIFSFDHKTQTLYTCDAFGMHYCSDIVFDEDLKTIEPDFHYYYDCLMGPNARSVLSALKRMGELPSVKMIATGHGPLLYHNVEELTGRYRTWSQNQTKAETSIGVFYVSEYGYSDRLAQAIINGITKTGVGVDVVDLGAAVDLQELRELVGRCTGLVIGMSPAASAASIQGALSTILGSVNEKQAVGIFETGGGDDEPIDPLLSKFRNLGLTTAFPAIRIKQTPTENTYKLCEEAGTDLGQWVTRDRSIKAMKSLGADLDKALGRLSGGLYIITAKKGDVSSAMLASWVNQASFKPLGFSIAVAKDRAIESLMQVGDRFVLNVLEEGNYQPLMRHFLKRFAPGADRFEGVKTQPAENGAPILGDALAYMECEVVSRMDCGDHWAVYSTVYAGRVSKSEALTAVHHRKVGNHY.

The segment at 43–236 is zinc metallo-hydrolase; that stretch reads QNGTTYNSFL…PSVKMIATGH (194 aa). Fe cation contacts are provided by His92, Glu94, Asp96, His159, Asp178, and His236. Residues 265–409 enclose the Flavodoxin-like domain; sequence IGVFYVSEYG…DLGQWVTRDR (145 aa). Residues 410–574 are flavodoxin-reductase-like; the sequence is SIKAMKSLGA…VHHRKVGNHY (165 aa).

This sequence in the N-terminal section; belongs to the zinc metallo-hydrolase group 3 family. In the C-terminal section; belongs to the flavodoxin reductase family. It depends on Fe cation as a cofactor.

In terms of biological role, mediates electron transfer from NADH to oxygen, reducing it to water. This modular protein has 3 redox cofactors, in other organisms the same activity requires 2 or 3 proteins. This Nostoc sp. (strain PCC 7120 / SAG 25.82 / UTEX 2576) protein is Putative diflavin flavoprotein A 3 (dfa3).